The following is a 251-amino-acid chain: ATP synthase subunit a (251 aa).

Helical transmembrane passes span 14–34 (GFVK…LLAV), 78–98 (YLPF…FAVF), 107–127 (SLST…FYGI), 174–194 (MILA…MGVL), and 196–216 (LLIG…YIAA). The disordered stretch occupies residues 224–251 (NAGASDDEGGEDAKSACAAGGKICKHKP).

It belongs to the ATPase A chain family. F-type ATPases have 2 components, CF(1) - the catalytic core - and CF(0) - the membrane proton channel. CF(1) has five subunits: alpha(3), beta(3), gamma(1), delta(1), epsilon(1). CF(0) has three main subunits: a(1), b(2) and c(9-12). The alpha and beta chains form an alternating ring which encloses part of the gamma chain. CF(1) is attached to CF(0) by a central stalk formed by the gamma and epsilon chains, while a peripheral stalk is formed by the delta and b chains.

Its subcellular location is the cell inner membrane. Key component of the proton channel; it plays a direct role in the translocation of protons across the membrane. In Nitrosospira multiformis (strain ATCC 25196 / NCIMB 11849 / C 71), this protein is ATP synthase subunit a.